The following is a 3390-amino-acid chain: Genome polyprotein (3390 aa).

The tract at residues Met-1–Met-15 is interaction with host EXOC1. Topologically, residues Met-1–Lys-100 are cytoplasmic. The interval Leu-37–Phe-72 is hydrophobic; homodimerization of capsid protein C. The propeptide at Thr-101 to Ala-114 is ER anchor for the capsid protein C, removed in mature form by serine protease NS3. A helical transmembrane segment spans residues Thr-101–Thr-118. Over Ser-119–Arg-243 the chain is Extracellular. N-linked (GlcNAc...) asparagine; by host glycosylation occurs at Asn-183. Residues His-244–Gln-264 form a helical membrane-spanning segment. Position 265 (Lys-265) is a topological domain, cytoplasmic. The helical transmembrane segment at Val-266 to Thr-280 threads the bilayer. The Extracellular portion of the chain corresponds to Met-281 to Thr-723. Intrachain disulfides connect Cys-283-Cys-310, Cys-340-Cys-401, Cys-354-Cys-385, and Cys-372-Cys-396. N-linked (GlcNAc...) asparagine; by host glycosylation occurs at Asn-347. Residues Asp-378 to Gly-391 are fusion peptide. Asn-433 carries an N-linked (GlcNAc...) asparagine; by host glycan. Intrachain disulfides connect Cys-463–Cys-563 and Cys-580–Cys-611. The chain crosses the membrane as a helical span at residues Ala-724 to Ile-744. Residues Gly-745–Asn-750 lie on the Cytoplasmic side of the membrane. The chain crosses the membrane as a helical span at residues Thr-751–Val-771. Residues Gln-772 to Met-1193 are Extracellular-facing. 6 disulfides stabilise this stretch: Cys-777-Cys-788, Cys-828-Cys-916, Cys-952-Cys-996, Cys-1053-Cys-1102, Cys-1064-Cys-1086, and Cys-1085-Cys-1089. Residues Asn-903 and Asn-980 are each glycosylated (N-linked (GlcNAc...) asparagine; by host). 2 N-linked (GlcNAc...) asparagine; by host glycosylation sites follow: Asn-1132 and Asn-1188. Residues Gly-1194 to Leu-1218 form a helical membrane-spanning segment. The Cytoplasmic segment spans residues Arg-1219 to Arg-1224. Residues Glu-1225–Glu-1243 form a helical membrane-spanning segment. The Lumenal segment spans residues Asp-1244 to Thr-1267. The chain crosses the membrane as a helical span at residues Tyr-1268 to Val-1288. A topological domain (cytoplasmic) is located at residue Ala-1289. The chain crosses the membrane as a helical span at residues Trp-1290–Ser-1308. The Lumenal portion of the chain corresponds to Ser-1309–Asp-1315. A helical transmembrane segment spans residues Trp-1316 to Leu-1336. Over Lys-1337–Ser-1344 the chain is Cytoplasmic. A helical membrane pass occupies residues Trp-1345–Leu-1365. At Arg-1366–Asp-1368 the chain is on the lumenal side. Residues Val-1369–Gly-1389 traverse the membrane as a helical segment. The Cytoplasmic portion of the chain corresponds to Thr-1390–Lys-1443. Residues Val-1396–Glu-1435 are interacts with and activates NS3 protease. The segment at residues Thr-1444–Trp-1464 is an intramembrane region (helical). At His-1465–Thr-2146 the chain is on the cytoplasmic side. A Peptidase S7 domain is found at Ser-1474–Glu-1651. Catalysis depends on charge relay system; for serine protease NS3 activity residues His-1524, Asp-1548, and Ser-1608. Residues Glu-1654 to Glu-1810 form the Helicase ATP-binding domain. The tract at residues Lys-1658–Asn-1661 is important for RNA-binding. Position 1667–1674 (Leu-1667–Thr-1674) interacts with ATP. The DEAH box signature appears at Asp-1758 to His-1761. The region spanning Gly-1821 to Glu-1986 is the Helicase C-terminal domain. Lys-1862 is modified (N6-acetyllysine; by host). Residues Leu-2147–Gly-2167 traverse the membrane as a helical segment. At Lys-2168 to Gly-2169 the chain is on the lumenal side. An intramembrane region (helical) is located at residues Ile-2170 to Ala-2190. Position 2191 (Asp-2191) is a topological domain, lumenal. The helical transmembrane segment at Val-2192–Ile-2212 threads the bilayer. Topologically, residues Pro-2213–Ala-2227 are cytoplasmic. A helical transmembrane segment spans residues Tyr-2228–Leu-2248. At Glu-2249–Asp-2273 the chain is on the lumenal side. An intramembrane region (helical) is located at residues Leu-2274–Leu-2294. At Arg-2295 to Val-2305 the chain is on the lumenal side. Asn-2300 and Asn-2304 each carry an N-linked (GlcNAc...) asparagine; by host glycan. An intramembrane region (helical) is located at residues Ser-2306 to Ile-2326. Residues Ser-2327–Pro-2346 are Lumenal-facing. A helical transmembrane segment spans residues Leu-2347 to Leu-2367. At Gln-2368 to Gln-2412 the chain is on the cytoplasmic side. The chain crosses the membrane as a helical span at residues Val-2413 to Cys-2433. Over Glu-2434–Thr-2458 the chain is Lumenal. Asn-2456 is a glycosylation site (N-linked (GlcNAc...) asparagine; by host). The chain crosses the membrane as a helical span at residues Ile-2459–Leu-2479. The Cytoplasmic portion of the chain corresponds to Ser-2480–Trp-3390. The mRNA cap 0-1 NS5-type MT domain maps to Thr-2492–His-2753. Ser-2546 is a binding site for S-adenosyl-L-methionine. Ser-2546 carries the phosphoserine modification. Lys-2551 acts as the For 2'-O-MTase activity in catalysis. An SUMO-interacting motif motif is present at residues Val-2567–Leu-2570. S-adenosyl-L-methionine-binding residues include Gly-2576, Trp-2577, Thr-2594, Lys-2595, Asp-2621, and Val-2622. The active-site For 2'-O-MTase activity is the Asp-2636. Ile-2637 lines the S-adenosyl-L-methionine pocket. Catalysis depends on for 2'-O-MTase activity residues Lys-2670 and Glu-2706. Tyr-2708 is an S-adenosyl-L-methionine binding site. Zn(2+)-binding residues include Glu-2927, His-2931, Cys-2936, and Cys-2939. A RdRp catalytic domain is found at Ala-3018 to Leu-3168. Positions 3202, 3218, and 3337 each coordinate Zn(2+).

In the N-terminal section; belongs to the class I-like SAM-binding methyltransferase superfamily. mRNA cap 0-1 NS5-type methyltransferase family. Homodimer. Interacts (via N-terminus) with host EXOC1 (via C-terminus); this interaction results in EXOC1 degradation through the proteasome degradation pathway. In terms of assembly, forms heterodimers with envelope protein E in the endoplasmic reticulum and Golgi. As to quaternary structure, homodimer; in the endoplasmic reticulum and Golgi. Interacts with protein prM. Interacts with non-structural protein 1. Homodimer; Homohexamer when secreted. Interacts with envelope protein E. In terms of assembly, interacts (via N-terminus) with serine protease NS3. As to quaternary structure, forms a heterodimer with serine protease NS3. May form homooligomers. Forms a heterodimer with NS2B. Interacts with NS4B. Interacts with unphosphorylated RNA-directed RNA polymerase NS5; this interaction stimulates RNA-directed RNA polymerase NS5 guanylyltransferase activity. Interacts with host SHFL. In terms of assembly, interacts with host MAVS; this interaction inhibits the synthesis of IFN-beta. Interacts with host SHFL. Interacts with host AUP1; the interaction occurs in the presence of Dengue virus NS4B and induces lipophagy which facilitates production of virus progeny particles. As to quaternary structure, interacts with serine protease NS3. Homodimer. Interacts with host STAT2; this interaction inhibits the phosphorylation of the latter, and, when all viral proteins are present (polyprotein), targets STAT2 for degradation. Interacts with serine protease NS3. Post-translationally, specific enzymatic cleavages in vivo yield mature proteins. Cleavages in the lumen of endoplasmic reticulum are performed by host signal peptidase, whereas cleavages in the cytoplasmic side are performed by serine protease NS3. Signal cleavage at the 2K-4B site requires a prior NS3 protease-mediated cleavage at the 4A-2K site. In terms of processing, cleaved in post-Golgi vesicles by a host furin, releasing the mature small envelope protein M, and peptide pr. This cleavage is incomplete as up to 30% of viral particles still carry uncleaved prM. N-glycosylated. Post-translationally, N-glycosylated. The excreted form is glycosylated and this is required for efficient secretion of the protein from infected cells. In terms of processing, acetylated by host KAT5. Acetylation modulates NS3 RNA-binding and unwinding activities and plays an important positive role for viral replication. Sumoylation of RNA-directed RNA polymerase NS5 increases NS5 protein stability allowing proper viral RNA replication. Post-translationally, phosphorylated on serines residues. This phosphorylation may trigger NS5 nuclear localization.

It is found in the virion. Its subcellular location is the host nucleus. The protein resides in the host cytoplasm. It localises to the host perinuclear region. The protein localises to the secreted. It is found in the virion membrane. Its subcellular location is the host endoplasmic reticulum membrane. The protein resides in the host mitochondrion. It carries out the reaction Selective hydrolysis of -Xaa-Xaa-|-Yaa- bonds in which each of the Xaa can be either Arg or Lys and Yaa can be either Ser or Ala.. The catalysed reaction is RNA(n) + a ribonucleoside 5'-triphosphate = RNA(n+1) + diphosphate. It catalyses the reaction a ribonucleoside 5'-triphosphate + H2O = a ribonucleoside 5'-diphosphate + phosphate + H(+). The enzyme catalyses ATP + H2O = ADP + phosphate + H(+). It carries out the reaction a 5'-end (5'-triphosphoguanosine)-ribonucleoside in mRNA + S-adenosyl-L-methionine = a 5'-end (N(7)-methyl 5'-triphosphoguanosine)-ribonucleoside in mRNA + S-adenosyl-L-homocysteine. The catalysed reaction is a 5'-end (N(7)-methyl 5'-triphosphoguanosine)-ribonucleoside in mRNA + S-adenosyl-L-methionine = a 5'-end (N(7)-methyl 5'-triphosphoguanosine)-(2'-O-methyl-ribonucleoside) in mRNA + S-adenosyl-L-homocysteine + H(+). Plays a role in virus budding by binding to the cell membrane and gathering the viral RNA into a nucleocapsid that forms the core of a mature virus particle. During virus entry, may induce genome penetration into the host cytoplasm after hemifusion induced by the surface proteins. Can migrate to the cell nucleus where it modulates host functions. Overcomes the anti-viral effects of host EXOC1 by sequestering and degrading the latter through the proteasome degradation pathway. In terms of biological role, inhibits RNA silencing by interfering with host Dicer. Functionally, prevents premature fusion activity of envelope proteins in trans-Golgi by binding to envelope protein E at pH6.0. After virion release in extracellular space, gets dissociated from E dimers. Its function is as follows. Acts as a chaperone for envelope protein E during intracellular virion assembly by masking and inactivating envelope protein E fusion peptide. prM is the only viral peptide matured by host furin in the trans-Golgi network probably to avoid catastrophic activation of the viral fusion activity in acidic Golgi compartment prior to virion release. prM-E cleavage is inefficient, and many virions are only partially matured. These uncleaved prM would play a role in immune evasion. May play a role in virus budding. Exerts cytotoxic effects by activating a mitochondrial apoptotic pathway through M ectodomain. May display a viroporin activity. In terms of biological role, binds to host cell surface receptor and mediates fusion between viral and cellular membranes. Envelope protein is synthesized in the endoplasmic reticulum in the form of heterodimer with protein prM. They play a role in virion budding in the ER, and the newly formed immature particle is covered with 60 spikes composed of heterodimer between precursor prM and envelope protein E. The virion is transported to the Golgi apparatus where the low pH causes dissociation of PrM-E heterodimers and formation of E homodimers. prM-E cleavage is inefficient, and many virions are only partially matured. These uncleaved prM would play a role in immune evasion. Functionally, involved in immune evasion, pathogenesis and viral replication. Once cleaved off the polyprotein, is targeted to three destinations: the viral replication cycle, the plasma membrane and the extracellular compartment. Essential for viral replication. Required for formation of the replication complex and recruitment of other non-structural proteins to the ER-derived membrane structures. Excreted as a hexameric lipoparticle that plays a role against host immune response. Antagonizing the complement function. Binds to the host macrophages and dendritic cells. Inhibits signal transduction originating from Toll-like receptor 3 (TLR3). Its function is as follows. Disrupts the host endothelial glycocalyx layer of host pulmonary microvascular endothelial cells, inducing degradation of sialic acid and shedding of heparan sulfate proteoglycans. NS1 induces expression of sialidases, heparanase, and activates cathepsin L, which activates heparanase via enzymatic cleavage. These effects are probably linked to the endothelial hyperpermeability observed in severe dengue disease. Component of the viral RNA replication complex that functions in virion assembly and antagonizes the host immune response. In terms of biological role, required cofactor for the serine protease function of NS3. May have membrane-destabilizing activity and form viroporins. Functionally, displays three enzymatic activities: serine protease, NTPase and RNA helicase. NS3 serine protease, in association with NS2B, performs its autocleavage and cleaves the polyprotein at dibasic sites in the cytoplasm: C-prM, NS2A-NS2B, NS2B-NS3, NS3-NS4A, NS4A-2K and NS4B-NS5. NS3 RNA helicase binds RNA and unwinds dsRNA in the 3' to 5' direction. Its function is as follows. Regulates the ATPase activity of the NS3 helicase activity. NS4A allows NS3 helicase to conserve energy during unwinding. Plays a role in the inhibition of the host innate immune response. Interacts with host MAVS and thereby prevents the interaction between RIGI and MAVS. In turn, IFN-beta production is impaired. Interacts with host AUP1 which mediates induction of lipophagy in host cells and facilitates production of virus progeny particles. Functions as a signal peptide for NS4B and is required for the interferon antagonism activity of the latter. In terms of biological role, induces the formation of ER-derived membrane vesicles where the viral replication takes place. Inhibits interferon (IFN)-induced host STAT1 phosphorylation and nuclear translocation, thereby preventing the establishment of cellular antiviral state by blocking the IFN-alpha/beta pathway. Functionally, replicates the viral (+) and (-) RNA genome, and performs the capping of genomes in the cytoplasm. NS5 methylates viral RNA cap at guanine N-7 and ribose 2'-O positions. Besides its role in RNA genome replication, also prevents the establishment of cellular antiviral state by blocking the interferon-alpha/beta (IFN-alpha/beta) signaling pathway. Inhibits host TYK2 and STAT2 phosphorylation, thereby preventing activation of JAK-STAT signaling pathway. The sequence is that of Genome polyprotein from Dengue virus type 3 (strain Philippines/H87/1956) (DENV-3).